The sequence spans 506 residues: Probable cytochrome P450 309a1 (506 aa).

3 positions are modified to phosphothreonine: Thr-75, Thr-78, and Thr-81. Cys-452 serves as a coordination point for heme.

Belongs to the cytochrome P450 family. The cofactor is heme.

Its subcellular location is the endoplasmic reticulum membrane. The protein localises to the microsome membrane. Its function is as follows. May be involved in the metabolism of insect hormones and in the breakdown of synthetic insecticides. This chain is Probable cytochrome P450 309a1 (Cyp309a1), found in Drosophila melanogaster (Fruit fly).